The sequence spans 824 residues: Probable ion channel POLLUX (824 aa).

Over residues 45–54 the composition is skewed to low complexity; it reads DGDDSSNLPT. The disordered stretch occupies residues 45–70; the sequence is DGDDSSNLPTVPNPEEKPVPVPSQSP. 4 helical membrane passes run 81–101, 135–155, 198–218, and 250–270; these read FSLTHCLKFICSCSFTYVMFL, AVVFFSVIITFVLPFLLYMYL, LALLLATVVLIVYGGLALYAV, and IVSVAISAGGMLIFATMLGLI. 2 RCK N-terminal domains span residues 291-432 and 550-699; these read SNHI…ETVV and PEKI…DKSI. A coiled-coil region spans residues 325 to 346; the sequence is LAERDKEEMETDIAKFEFDLMG.

It belongs to the castor/pollux (TC 1.A.1.23) family.

Its subcellular location is the nucleus membrane. The polypeptide is Probable ion channel POLLUX (Arabidopsis thaliana (Mouse-ear cress)).